We begin with the raw amino-acid sequence, 240 residues long: LexA repressor (240 aa).

A DNA-binding region (H-T-H motif) is located at residues 26 to 46; that stretch reads FDEMKDALDLASKSGIHRLIT. The disordered stretch occupies residues 78-113; it reads QPRRGFSPSVIEGSLGKPQPVQPPAPAKPANDENNS. Catalysis depends on for autocatalytic cleavage activity residues S160 and K198.

The protein belongs to the peptidase S24 family. Homodimer.

It catalyses the reaction Hydrolysis of Ala-|-Gly bond in repressor LexA.. Its function is as follows. Represses a number of genes involved in the response to DNA damage (SOS response), including recA and lexA. In the presence of single-stranded DNA, RecA interacts with LexA causing an autocatalytic cleavage which disrupts the DNA-binding part of LexA, leading to derepression of the SOS regulon and eventually DNA repair. In Rhizobium rhizogenes (strain K84 / ATCC BAA-868) (Agrobacterium radiobacter), this protein is LexA repressor.